A 476-amino-acid chain; its full sequence is Transposase for transposon Tn5 (476 aa).

Positions 1–70 (MITSALHRAA…YRFIRNPNVS (70 aa)) are interaction with DNA. Mg(2+) is bound by residues Asp97 and Asp188. Interaction with DNA stretches follow at residues 237 to 255 (YQISIPQKGVVDKRGKRKN) and 319 to 348 (YTHRWRIEEFHKAWKTGAGAERQRMEEPDN). Glu326 contributes to the Mg(2+) binding site. Residues 369–476 (SFTLPQALRA…KDLMAQGIKI (108 aa)) form an important for dimerization region.

It belongs to the transposase 11 family. As to quaternary structure, monomer. Homodimer of tnp (isoform 1), and heterodimer of tnp (isoform 1) and inh (isoform 2). Mg(2+) is required as a cofactor.

Functionally, mediates transposition of transposon Tn5 by a 'cut and paste' mechanism. First, the monomeric transposase binds the 19 bp inverted DNA repeats flanking the transposon. Then, dimerization of the DNA-bound transposase creates a synaptic DNA complex. After nicking of the first DNA strand, excision of the transposon proceeds through a series of intermediates. The transposase then mediates the insertion of the transposon at a new site by strand transfer. The activity of the wild-type transposase is very low, and is further inhibited by dimerization with the transposase inhibitor (inh). This chain is Transposase for transposon Tn5 (tnpA), found in Escherichia coli.